We begin with the raw amino-acid sequence, 367 residues long: NADH-quinone oxidoreductase subunit H (367 aa).

The next 8 membrane-spanning stretches (helical) occupy residues 18–38 (VLLF…VAYL), 87–107 (LCFL…WAVI), 132–152 (IGVL…IIAG), 180–200 (LTIV…IVIA), 204–224 (MPYW…ISAL), 257–277 (FFLG…IFFF), 291–311 (IIPG…CFIW), and 328–348 (GWKV…GILV).

The protein belongs to the complex I subunit 1 family. NDH-1 is composed of 14 different subunits. Subunits NuoA, H, J, K, L, M, N constitute the membrane sector of the complex.

The protein resides in the cell inner membrane. It carries out the reaction a quinone + NADH + 5 H(+)(in) = a quinol + NAD(+) + 4 H(+)(out). In terms of biological role, NDH-1 shuttles electrons from NADH, via FMN and iron-sulfur (Fe-S) centers, to quinones in the respiratory chain. The immediate electron acceptor for the enzyme in this species is believed to be ubiquinone. Couples the redox reaction to proton translocation (for every two electrons transferred, four hydrogen ions are translocated across the cytoplasmic membrane), and thus conserves the redox energy in a proton gradient. This subunit may bind ubiquinone. This is NADH-quinone oxidoreductase subunit H from Ehrlichia ruminantium (strain Gardel).